A 1145-amino-acid chain; its full sequence is MPPPRTREGRGHRDRDHHRAPREEEAPEKWDWNCPETRCLLEDVFFRDEDYIRRGSEECQKFWAFFERLQRFQHLKTSQKKKKDPGMPKHGIAALADLPLTYDPRYRINLSILSPDTRGRHGPGRGLPPERVSEFRRALLHYLDFQQKQAFGRLAKLQRERAALPIAQYGNRILQTLKEHQVVVVAGDTGCGKSTQVPQYLLAAGFSHVACTQPRRIACISLAKRVGFESLSQYGSQVGYQIRFESTRSAATKIVFLTVGLLLRQIQREPSLPQYQVLIVDEVHERHLHNDFLLGVLQRLLPQRPDLKVILMSATINISLFSSYFSHAPVVQVPGRLFPITVVYQPQEADQTASKSEKLDPRPFLRVLEAIDNKYPPEERGDLLVFLSGMAEITTVLDAAQAYASLTQRWVVLPLHSALSVSDQDKVFDVAPAGVRKCILSTNIAETSVTIDGIRFVVDSGKVKEMSYDPQAKLQRLQEFWISQASAEQRKGRAGRTGPGVCYRLYAESDYDAFAPYPVPEIRRVALDALVLQMKSMSVGDPRTFPFIEPPPPASVETAILYLQEQGALDSSEALTPIGSLLAQLPVDVVIGKMLILGSMFSLAEPVLTIAAALSVQSPFTRSAQSNLDCATARRPLESDQGDPFTLFNVFNAWVQVKSERSGNSRKWCRRRGVEEHRLYEMANLRRQFKELLEDHGLLSGAQVVAPGDSYSRLQQRRERRALHQLKRQHEEGGGRRRKVLRLQEDGCSSDEEDRKGSTSQRADSVDIQDVKFKLRHNLEQLQAAASSAQDLTRDQLALLKLVLGRGLYPQLAVPDAFNSGRKDSDQIFHTQAKQGTVLHPTCVFANSPEVLHTQGQEASGQEGSQDGRDQMSCKHQLLAFVSLLETNKPYLVNCVRIPALQSLLLFSRSIDTNGDCSRLVADGWLELQLADSESAVRLLATSLRLRAHWESALDRQLARQAQRRKLEQEEDVGSPAVSPQEVAALSRELLQFMAAKVPYRLRRLTGLEAQNLYVGPQTITTAPSLPGLFGNSTLSPHPTKGGYAVSDYLTYNCLTSDTDLYSDCLRSFWTCPHCGLHMPFTPLERIAHENTCPEAPGDDPGSEEAAPAPPQKTSALQRPYHCQVCGQDFLFTPTEVLRHRRQHV.

Basic and acidic residues predominate over residues 1–14; that stretch reads MPPPRTREGRGHRD. Positions 1–27 are disordered; the sequence is MPPPRTREGRGHRDRDHHRAPREEEAP. Residues 174 to 334 form the Helicase ATP-binding domain; the sequence is LQTLKEHQVV…FSHAPVVQVP (161 aa). Residue 187 to 194 coordinates ATP; that stretch reads GDTGCGKS. The DEAH box signature appears at 281–284; sequence DEVH. The Helicase C-terminal domain maps to 370–538; it reads AIDNKYPPEE…ALVLQMKSMS (169 aa). 2 disordered regions span residues 726–764 and 1091–1114; these read LKRQ…QRAD and NTCP…PQKT. 2 positions are modified to phosphoserine: S749 and S750.

It belongs to the DEAD box helicase family. DEAH subfamily. Forms a complex with RUVBL1 and RUVBL2. Part of a complex composed of SMG1, DHX34 and UPF1; within the complex DHX34 acts as a scaffolding protein to facilitate SMG1 phosphorylation of UPF1. Interacts with UPF1, MOV10, EIF4A3, XRN2, SMG6, SMG7, SMG9, UPF3A, UPF3B, CASC3/MLN51, XRN1, DIS3 and DCP1A; the interactions are RNA-independent. Interacts with NCBP1/CPB80; the interaction is RNA-dependent. Interacts (via C-terminus) with SMG1; the interaction is RNA-independent.

It catalyses the reaction ATP + H2O = ADP + phosphate + H(+). In terms of biological role, probable ATP-binding RNA helicase. Required for nonsense-mediated decay (NMD) degradation of mRNA transcripts containing premature stop codons. Promotes the phosphorylation of UPF1 along with its interaction with key NMD pathway proteins UPF2 and EIF4A3. Negatively regulates the nucleotide binding ability and ATP hydrolysis of the RUVBL1-RUVBL2 complex via induction of N-terminus conformation changes of the RUVBL2 subunits. The protein is Probable ATP-dependent RNA helicase DHX34 of Mus musculus (Mouse).